A 178-amino-acid polypeptide reads, in one-letter code: Peptide methionine sulfoxide reductase MsrA (178 aa).

C12 is a catalytic residue.

Belongs to the MsrA Met sulfoxide reductase family.

It carries out the reaction L-methionyl-[protein] + [thioredoxin]-disulfide + H2O = L-methionyl-(S)-S-oxide-[protein] + [thioredoxin]-dithiol. It catalyses the reaction [thioredoxin]-disulfide + L-methionine + H2O = L-methionine (S)-S-oxide + [thioredoxin]-dithiol. Functionally, has an important function as a repair enzyme for proteins that have been inactivated by oxidation. Catalyzes the reversible oxidation-reduction of methionine sulfoxide in proteins to methionine. The polypeptide is Peptide methionine sulfoxide reductase MsrA (Erwinia tasmaniensis (strain DSM 17950 / CFBP 7177 / CIP 109463 / NCPPB 4357 / Et1/99)).